We begin with the raw amino-acid sequence, 556 residues long: Potassium-transporting ATPase potassium-binding subunit (556 aa).

Transmembrane regions (helical) follow at residues 3 to 23 (AHGV…TPIL), 57 to 77 (AAYA…LYAL), 129 to 149 (GLTV…VALM), 172 to 192 (LGLL…QGVP), 247 to 267 (LVNL…TNTF), 278 to 298 (WALL…AWWA), 319 to 339 (LGVA…CGAV), 346 to 366 (LLPL…VVVG), 371 to 391 (GLYG…LMVG), 408 to 428 (LAVI…GLAI), 486 to 506 (FVVM…MAVP), and 516 to 536 (GWLF…LTYF).

The protein belongs to the KdpA family. In terms of assembly, the system is composed of three essential subunits: KdpA, KdpB and KdpC.

Its subcellular location is the cell inner membrane. In terms of biological role, part of the high-affinity ATP-driven potassium transport (or Kdp) system, which catalyzes the hydrolysis of ATP coupled with the electrogenic transport of potassium into the cytoplasm. This subunit binds the periplasmic potassium ions and delivers the ions to the membrane domain of KdpB through an intramembrane tunnel. The protein is Potassium-transporting ATPase potassium-binding subunit of Paramagnetospirillum magneticum (strain ATCC 700264 / AMB-1) (Magnetospirillum magneticum).